The following is a 115-amino-acid chain: T cell receptor delta variable 2 (115 aa).

A signal peptide spans 1-19 (MQRISSLIHLSLFWAGVMS). The Ig-like domain occupies 25-115 (PEHQTVPVSI…EGSYYCACDT (91 aa)). A disulfide bond links Cys-42 and Cys-111.

As to quaternary structure, gamma-delta TR is a heterodimer composed of a gamma and delta chain; disulfide-linked. The gamma-delta TR is associated with the transmembrane signaling CD3 coreceptor proteins following the stoichiometry: a single gamma-delta TR heterodimer associates with one CD3D-CD3E heterodimer, one CD3G-CD3E heterodimer and one CD247 homodimer forming a stable octameric structure. Upon activation, gamma-delta TR complex associates with FCER1G to initiate intracellular signaling.

It localises to the cell membrane. Functionally, v region of the variable domain of T cell receptor (TR) delta chain that participates in the antigen recognition. Gamma-delta TRs recognize a variety of self and foreign non-peptide antigens frequently expressed at the epithelial boundaries between the host and external environment, including endogenous lipids presented by MH-like protein CD1D and phosphoantigens presented by butyrophilin-like molecule BTN3A1. Upon antigen recognition induces rapid, innate-like immune responses involved in pathogen clearance and tissue repair. Binding of gamma-delta TR complex to antigen triggers phosphorylation of immunoreceptor tyrosine-based activation motifs (ITAMs) in the CD3 chains by the LCK and FYN kinases, allowing the recruitment, phosphorylation, and activation of ZAP70 that facilitates phosphorylation of the scaffolding proteins LCP2 and LAT. This lead to the formation of a supramolecular signalosome that recruits the phospholipase PLCG1, resulting in calcium mobilization and ERK activation, ultimately leading to T cell expansion and differentiation into effector cells. Gamma-delta TRs are produced through somatic rearrangement of a limited repertoire of variable (V), diversity (D), and joining (J) genes. The potential diversity of gamma-delta TRs is conferred by the unique ability to rearrange (D) genes in tandem and to utilize all three reading frames. The combinatorial diversity is considerably increased by the sequence exonuclease trimming and random nucleotide (N) region additions which occur during the V-(D)-J rearrangements. This chain is T cell receptor delta variable 2, found in Homo sapiens (Human).